Here is a 633-residue protein sequence, read N- to C-terminus: Phosphomethylpyrimidine synthase (633 aa).

Substrate-binding positions include asparagine 245, methionine 274, tyrosine 303, histidine 339, 359-361 (SRG), 400-403 (DGLR), and glutamate 439. Histidine 443 lines the Zn(2+) pocket. Tyrosine 466 serves as a coordination point for substrate. Histidine 507 is a binding site for Zn(2+). Cysteine 587, cysteine 590, and cysteine 595 together coordinate [4Fe-4S] cluster.

This sequence belongs to the ThiC family. Homodimer. [4Fe-4S] cluster serves as cofactor.

It catalyses the reaction 5-amino-1-(5-phospho-beta-D-ribosyl)imidazole + S-adenosyl-L-methionine = 4-amino-2-methyl-5-(phosphooxymethyl)pyrimidine + CO + 5'-deoxyadenosine + formate + L-methionine + 3 H(+). Its pathway is cofactor biosynthesis; thiamine diphosphate biosynthesis. Catalyzes the synthesis of the hydroxymethylpyrimidine phosphate (HMP-P) moiety of thiamine from aminoimidazole ribotide (AIR) in a radical S-adenosyl-L-methionine (SAM)-dependent reaction. In Neisseria meningitidis serogroup C / serotype 2a (strain ATCC 700532 / DSM 15464 / FAM18), this protein is Phosphomethylpyrimidine synthase.